The primary structure comprises 134 residues: Phosphoribosyl-AMP cyclohydrolase (134 aa).

Asp80 contacts Mg(2+). Zn(2+) is bound at residue Cys81. Mg(2+)-binding residues include Asp82 and Asp84. Residues Cys98 and Cys105 each coordinate Zn(2+).

It belongs to the PRA-CH family. In terms of assembly, homodimer. Mg(2+) is required as a cofactor. Requires Zn(2+) as cofactor.

Its subcellular location is the cytoplasm. It catalyses the reaction 1-(5-phospho-beta-D-ribosyl)-5'-AMP + H2O = 1-(5-phospho-beta-D-ribosyl)-5-[(5-phospho-beta-D-ribosylamino)methylideneamino]imidazole-4-carboxamide. Its pathway is amino-acid biosynthesis; L-histidine biosynthesis; L-histidine from 5-phospho-alpha-D-ribose 1-diphosphate: step 3/9. Functionally, catalyzes the hydrolysis of the adenine ring of phosphoribosyl-AMP. This chain is Phosphoribosyl-AMP cyclohydrolase, found in Bordetella pertussis (strain Tohama I / ATCC BAA-589 / NCTC 13251).